The sequence spans 467 residues: uncharacterized protein (467 aa).

A disordered region spans residues 416-467 (KQQRAQTAVVGTTKELVSKATHMKPPRTPPGEAEHRKRSQSLAICQWNKNSR). The span at 455-467 (QSLAICQWNKNSR) shows a compositional bias: polar residues.

This is an uncharacterized protein from Homo sapiens (Human).